The sequence spans 341 residues: 5-formaminoimidazole-4-carboxamide-1-(beta)-D-ribofuranosyl 5'-monophosphate synthetase (341 aa).

2 residues coordinate 5-amino-1-(5-phospho-beta-D-ribosyl)imidazole-4-carboxamide: His-10 and Thr-77. Residues 106 to 317 (DREMKEKLMR…YYNLLFNETM (212 aa)) enclose the ATP-grasp domain. Residues 132 to 188 (EKLS…VLAY) and Glu-210 contribute to the ATP site. Asn-238 serves as a coordination point for 5-amino-1-(5-phospho-beta-D-ribosyl)imidazole-4-carboxamide. Residues Glu-277 and Glu-290 each contribute to the Mg(2+) site.

It belongs to the phosphohexose mutase family. Mg(2+) is required as a cofactor. It depends on Mn(2+) as a cofactor.

It catalyses the reaction 5-amino-1-(5-phospho-beta-D-ribosyl)imidazole-4-carboxamide + formate + ATP = 5-formamido-1-(5-phospho-D-ribosyl)imidazole-4-carboxamide + ADP + phosphate. It participates in purine metabolism; IMP biosynthesis via de novo pathway; 5-formamido-1-(5-phospho-D-ribosyl)imidazole-4-carboxamide from 5-amino-1-(5-phospho-D-ribosyl)imidazole-4-carboxamide (formate route): step 1/1. Its function is as follows. Catalyzes the ATP- and formate-dependent formylation of 5-aminoimidazole-4-carboxamide-1-beta-d-ribofuranosyl 5'-monophosphate (AICAR) to 5-formaminoimidazole-4-carboxamide-1-beta-d-ribofuranosyl 5'-monophosphate (FAICAR) in the absence of folates. In Nitrosopumilus maritimus (strain SCM1), this protein is 5-formaminoimidazole-4-carboxamide-1-(beta)-D-ribofuranosyl 5'-monophosphate synthetase.